The following is a 106-amino-acid chain: Ig kappa chain C region, B allele (106 aa).

The 98-residue stretch at 5 to 102 (PTVSIFPPST…SSSPVVKSFN (98 aa)) folds into the Ig-like domain. A disulfide bridge connects residues cysteine 26 and cysteine 86.

This is Ig kappa chain C region, B allele from Rattus norvegicus (Rat).